The following is a 304-amino-acid chain: Acetaldehyde dehydrogenase 4 (304 aa).

The active-site Acyl-thioester intermediate is Cys-131. NAD(+) contacts are provided by residues 162–170 and Asn-273; that span reads SAGPGTRKN.

Belongs to the acetaldehyde dehydrogenase family.

It catalyses the reaction acetaldehyde + NAD(+) + CoA = acetyl-CoA + NADH + H(+). This chain is Acetaldehyde dehydrogenase 4, found in Dechloromonas aromatica (strain RCB).